A 1193-amino-acid chain; its full sequence is DNA-directed RNA polymerase subunit beta (1193 aa).

Residues 1149–1162 (EEEIEMRDLEDEED) are compositionally biased toward acidic residues. The disordered stretch occupies residues 1149-1193 (EEEIEMRDLEDEEDAKQADGLALSGDEEPEETASADVERDVVTKE). Residues 1184–1193 (DVERDVVTKE) are compositionally biased toward basic and acidic residues.

It belongs to the RNA polymerase beta chain family. RNAP is composed of a core of 2 alpha, a beta and a beta' subunit. The core is associated with a delta subunit, and at least one of epsilon or omega. When a sigma factor is associated with the core the holoenzyme is formed, which can initiate transcription.

The enzyme catalyses RNA(n) + a ribonucleoside 5'-triphosphate = RNA(n+1) + diphosphate. Its function is as follows. DNA-dependent RNA polymerase catalyzes the transcription of DNA into RNA using the four ribonucleoside triphosphates as substrates. In Bacillus subtilis (strain 168), this protein is DNA-directed RNA polymerase subunit beta.